The following is an 832-amino-acid chain: SID1 transmembrane family member 2 (832 aa).

The first 18 residues, 1–18, serve as a signal peptide directing secretion; it reads MIAWRLPLCVLLVASVES. Residues 19-293 lie on the Extracellular side of the membrane; sequence HLGALGPKNV…VSQAVTSEAY (275 aa). N-linked (GlcNAc...) asparagine glycosylation is found at Asn27, Asn54, Asn60, Asn123, Asn141, and Asn165. The helical transmembrane segment at 294–314 threads the bilayer; it reads VGGMLFCLGIFLSFYLLTVLL. The Cytoplasmic portion of the chain corresponds to 315–447; sequence ACWENWRQRK…DKRVLRKKYQ (133 aa). Phosphoserine is present on residues Ser401, Ser403, and Ser404. A helical membrane pass occupies residues 448–468; that stretch reads IYFWNIATIAVFYALPVVQLV. The Extracellular portion of the chain corresponds to 469-499; sequence ITYQTVVNVTGNQDICYYNFLCAHPLGNLSA. N-linked (GlcNAc...) asparagine glycans are attached at residues Asn476 and Asn496. The helical transmembrane segment at 500-520 threads the bilayer; it reads FNNILSNLGYILLGLLFLLII. The Cytoplasmic segment spans residues 521–546; sequence LQREINHNRALLRNDLYALECGIPKH. A helical membrane pass occupies residues 547-567; it reads FGLFYAMGTALMMEGLLSACY. The Extracellular segment spans residues 568-605; it reads HVCPNYTNFQFDTSFMYMIAGLCMLKLYQKRHPDINAS. N-linked (GlcNAc...) asparagine glycosylation is found at Asn572 and Asn603. A helical membrane pass occupies residues 606-626; it reads AYSAYACLAIVIFFSVLGVVF. Over 627 to 631 the chain is Cytoplasmic; that stretch reads GKGNT. The chain crosses the membrane as a helical span at residues 632–652; the sequence is AFWIVFSVIHIISTLLLSTQL. At 653–688 the chain is on the extracellular side; sequence YYMGRWKLDSGIFRRILHVLYTDCIRQCSGPLYTDR. A helical transmembrane segment spans residues 689-709; sequence MVLLVMGNIINWSLAAYGLIM. The Cytoplasmic portion of the chain corresponds to 710–715; that stretch reads RPNDFA. A helical transmembrane segment spans residues 716 to 736; the sequence is SYLLAIGICNLLLYFAFYIIM. Topologically, residues 737–746 are extracellular; that stretch reads KLRSGERIKL. A helical transmembrane segment spans residues 747–767; it reads IPLLCIVCTSVVWGFALFFFF. At 768 to 796 the chain is on the cytoplasmic side; that stretch reads QGLSTWQKTPAESREHNRDCILLDFFDDH. Residues 797–817 traverse the membrane as a helical segment; the sequence is DIWHFLSSIAMFGSFLVLLTL. The Extracellular portion of the chain corresponds to 818-832; that stretch reads DDDLDTVQRDKIYVF.

This sequence belongs to the SID1 family. In terms of assembly, interacts with adapter protein complex 1 (AP-1) and AP-2, but not AP-3 and AP-4. Interacts with LAMP2. In terms of processing, glycosylated. In terms of tissue distribution, widely expressed, including in the liver, brain and kidney (at protein level).

The protein localises to the lysosome membrane. It localises to the cell membrane. Mediates the translocation of RNA and DNA across the lysosomal membrane during RNA and DNA autophagy (RDA), a process in which RNA and DNA is directly imported into lysosomes in an ATP-dependent manner, and degraded. Involved in the uptake of single-stranded oligonucleotides by living cells, a process called gymnosis. In vitro, mediates the uptake of linear DNA more efficiently than that of circular DNA, but exhibits similar uptake efficacy toward RNA and DNA. Binds long double-stranded RNA (dsRNA) (500 - 700 base pairs), but not dsRNA shorter than 100 bp. The chain is SID1 transmembrane family member 2 (Sidt2) from Mus musculus (Mouse).